The chain runs to 148 residues: Arginine repressor (148 aa).

This sequence belongs to the ArgR family.

It localises to the cytoplasm. Its pathway is amino-acid biosynthesis; L-arginine biosynthesis [regulation]. Regulates arginine biosynthesis genes. The protein is Arginine repressor of Prosthecochloris aestuarii (strain DSM 271 / SK 413).